The chain runs to 991 residues: Polyribonucleotide nucleotidyltransferase 2, mitochondrial (991 aa).

The N-terminal 39 residues, 1–39, are a transit peptide targeting the mitochondrion; sequence MSSIVNRASSASLPNFLAWRALGFRTICSGRLGFAPSVP. Positions 609–667 constitute a KH domain; sequence PRLATLKYSNDSLRTLIGPMGVLKRKIEVETGARLSIDNGTLTIVAKNQDVMEKAQEQV. The S1 motif 1 domain maps to 678–746; it reads GGVYKGTVSS…VRGNIKLSRK (69 aa). A disordered region spans residues 813 to 865; sequence EAEKSSPVNDNDKPRRAATSKPDRKPKSTASKLIATQKEEEALESIAPEETSA. Residues 822–838 show a composition bias toward basic and acidic residues; it reads DNDKPRRAATSKPDRKP. The S1 motif 2 domain maps to 925–987; the sequence is GTEMTATVDH…GVPVMALVDE (63 aa).

This sequence belongs to the polyribonucleotide nucleotidyltransferase family.

The protein resides in the mitochondrion. It carries out the reaction RNA(n+1) + phosphate = RNA(n) + a ribonucleoside 5'-diphosphate. Involved in the 3'-end maturation of mitochondrial mRNAs, rRNAs and tRNAs. Functions as a poly(A) mRNA 3'-5' degrading phosphorylase and is required for the degradation of highly expressed transcripts of non-coding regions. The chain is Polyribonucleotide nucleotidyltransferase 2, mitochondrial (PNP2) from Arabidopsis thaliana (Mouse-ear cress).